We begin with the raw amino-acid sequence, 299 residues long: Protease HtpX homolog (299 aa).

Transmembrane regions (helical) follow at residues 14-34 (IVLL…VGYL) and 39-59 (LVGG…SMIF). Histidine 143 is a binding site for Zn(2+). Glutamate 144 is an active-site residue. Residue histidine 147 participates in Zn(2+) binding. 2 consecutive transmembrane segments (helical) span residues 158–178 (IAVA…RMMW) and 198–218 (IILL…ASLV). Glutamate 227 contributes to the Zn(2+) binding site.

Belongs to the peptidase M48B family. Requires Zn(2+) as cofactor.

The protein resides in the cell membrane. This is Protease HtpX homolog from Streptococcus mutans serotype c (strain ATCC 700610 / UA159).